A 450-amino-acid chain; its full sequence is 3-phosphoshikimate 1-carboxyvinyltransferase (450 aa).

Residues Lys-28, Ser-29, and Arg-33 each contribute to the 3-phosphoshikimate site. Lys-28 is a binding site for phosphoenolpyruvate. Phosphoenolpyruvate is bound by residues Gly-100 and Arg-128. 3-phosphoshikimate-binding residues include Ser-173, Gln-175, Asp-326, and Lys-353. Gln-175 is a phosphoenolpyruvate binding site. Residue Asp-326 is the Proton acceptor of the active site. Arg-357 and Arg-402 together coordinate phosphoenolpyruvate.

It belongs to the EPSP synthase family. As to quaternary structure, monomer.

The protein resides in the cytoplasm. The catalysed reaction is 3-phosphoshikimate + phosphoenolpyruvate = 5-O-(1-carboxyvinyl)-3-phosphoshikimate + phosphate. It functions in the pathway metabolic intermediate biosynthesis; chorismate biosynthesis; chorismate from D-erythrose 4-phosphate and phosphoenolpyruvate: step 6/7. Catalyzes the transfer of the enolpyruvyl moiety of phosphoenolpyruvate (PEP) to the 5-hydroxyl of shikimate-3-phosphate (S3P) to produce enolpyruvyl shikimate-3-phosphate and inorganic phosphate. The chain is 3-phosphoshikimate 1-carboxyvinyltransferase from Brucella abortus biovar 1 (strain 9-941).